Consider the following 319-residue polypeptide: Annexin D4 (319 aa).

Annexin repeat units lie at residues Met1–Arg75 and His86–Ser157. The Ca(2+) site is built by Gly19, Gly21, and Glu72. Thr115 bears the Phosphothreonine mark. 2 positions are modified to phosphotyrosine: Tyr159 and Tyr211. Annexin repeat units follow at residues Asp169–Leu240 and Lys241–Ser316. The residue at position 277 (Ser277) is a Phosphoserine. At Tyr287 the chain carries Phosphotyrosine.

It belongs to the annexin (TC 1.A.31.1) family. Expressed mainly in roots and flowers. Lower in stems and leaves.

May be involved in osmotic stress and abscisic acid signaling in a calcium-dependent manner. This Arabidopsis thaliana (Mouse-ear cress) protein is Annexin D4 (ANN4).